The following is a 467-amino-acid chain: Glutamate--tRNA ligase (467 aa).

Positions 9-19 (PSPTGFLHIGG) match the 'HIGH' region motif. The 'KMSKS' region motif lies at 250–254 (KLSKR). Lys253 is an ATP binding site.

It belongs to the class-I aminoacyl-tRNA synthetase family. Glutamate--tRNA ligase type 1 subfamily. Monomer.

It is found in the cytoplasm. The catalysed reaction is tRNA(Glu) + L-glutamate + ATP = L-glutamyl-tRNA(Glu) + AMP + diphosphate. Functionally, catalyzes the attachment of glutamate to tRNA(Glu) in a two-step reaction: glutamate is first activated by ATP to form Glu-AMP and then transferred to the acceptor end of tRNA(Glu). The polypeptide is Glutamate--tRNA ligase (Mesomycoplasma hyopneumoniae (strain J / ATCC 25934 / NCTC 10110) (Mycoplasma hyopneumoniae)).